The sequence spans 342 residues: Isopentenyl-diphosphate delta-isomerase (342 aa).

Residue 11 to 12 (RK) coordinates substrate. Residues Ser-68, 69 to 71 (SMT), Ser-99, and Asn-127 contribute to the FMN site. 99 to 101 (SMR) contributes to the substrate binding site. Glu-163 serves as a coordination point for Mg(2+). Residues Lys-194, Thr-224, and 295-296 (AG) contribute to the FMN site.

Belongs to the IPP isomerase type 2 family. Homooctamer. Dimer of tetramers. The cofactor is FMN. It depends on NADPH as a cofactor. Mg(2+) serves as cofactor.

The protein localises to the cytoplasm. The catalysed reaction is isopentenyl diphosphate = dimethylallyl diphosphate. In terms of biological role, involved in the biosynthesis of isoprenoids. Catalyzes the 1,3-allylic rearrangement of the homoallylic substrate isopentenyl (IPP) to its allylic isomer, dimethylallyl diphosphate (DMAPP). In Rickettsia typhi (strain ATCC VR-144 / Wilmington), this protein is Isopentenyl-diphosphate delta-isomerase.